The sequence spans 236 residues: Phosphatidylserine decarboxylase proenzyme (236 aa).

Catalysis depends on Ser194, which acts as the Schiff-base intermediate with substrate; via pyruvic acid. Position 194 is a pyruvic acid (Ser); by autocatalysis (Ser194).

It belongs to the phosphatidylserine decarboxylase family. PSD-A subfamily. As to quaternary structure, heterodimer of a large membrane-associated beta subunit and a small pyruvoyl-containing alpha subunit. Requires pyruvate as cofactor. In terms of processing, is synthesized initially as an inactive proenzyme. Formation of the active enzyme involves a self-maturation process in which the active site pyruvoyl group is generated from an internal serine residue via an autocatalytic post-translational modification. Two non-identical subunits are generated from the proenzyme in this reaction, and the pyruvate is formed at the N-terminus of the alpha chain, which is derived from the carboxyl end of the proenzyme. The post-translation cleavage follows an unusual pathway, termed non-hydrolytic serinolysis, in which the side chain hydroxyl group of the serine supplies its oxygen atom to form the C-terminus of the beta chain, while the remainder of the serine residue undergoes an oxidative deamination to produce ammonia and the pyruvoyl prosthetic group on the alpha chain.

The protein localises to the cell membrane. The catalysed reaction is a 1,2-diacyl-sn-glycero-3-phospho-L-serine + H(+) = a 1,2-diacyl-sn-glycero-3-phosphoethanolamine + CO2. It participates in phospholipid metabolism; phosphatidylethanolamine biosynthesis; phosphatidylethanolamine from CDP-diacylglycerol: step 2/2. In terms of biological role, catalyzes the formation of phosphatidylethanolamine (PtdEtn) from phosphatidylserine (PtdSer). This is Phosphatidylserine decarboxylase proenzyme from Rhodospirillum rubrum (strain ATCC 11170 / ATH 1.1.1 / DSM 467 / LMG 4362 / NCIMB 8255 / S1).